A 349-amino-acid chain; its full sequence is Isopentenyl-diphosphate delta-isomerase (349 aa).

6 to 7 (RK) serves as a coordination point for substrate. FMN-binding positions include 62-64 (AMT), Ser-93, and Asn-122. Gln-152 contacts substrate. Glu-153 is a binding site for Mg(2+). Residues Lys-184, Thr-214, 258-259 (GG), and 280-281 (AG) each bind FMN.

It belongs to the IPP isomerase type 2 family. In terms of assembly, homooctamer. Dimer of tetramers. FMN is required as a cofactor. The cofactor is NADPH. It depends on Mg(2+) as a cofactor.

The protein resides in the cytoplasm. The enzyme catalyses isopentenyl diphosphate = dimethylallyl diphosphate. Functionally, involved in the biosynthesis of isoprenoids. Catalyzes the 1,3-allylic rearrangement of the homoallylic substrate isopentenyl (IPP) to its allylic isomer, dimethylallyl diphosphate (DMAPP). This Bacillus cereus (strain ATCC 14579 / DSM 31 / CCUG 7414 / JCM 2152 / NBRC 15305 / NCIMB 9373 / NCTC 2599 / NRRL B-3711) protein is Isopentenyl-diphosphate delta-isomerase.